Here is a 1021-residue protein sequence, read N- to C-terminus: Chondroitin sulfate ABC endolyase (1021 aa).

A signal peptide spans 1-24 (MPIFRFTALAMTLGLLSAPYNAMA). The Na(+) site is built by His43, Met70, Gln73, and Asp211. The active-site Proton acceptor is His501. Residue Tyr508 is the Proton donor of the active site.

Belongs to the polysaccharide lyase 8 family. As to quaternary structure, monomer.

The protein localises to the periplasm. It catalyses the reaction Endolytic cleavage of (1-&gt;4)-beta-galactosaminic bonds between N-acetylgalactosamine and either D-glucuronic acid or L-iduronic acid to produce a mixture of Delta(4)-unsaturated oligosaccharides of different sizes that are ultimately degraded to Delta(4)-unsaturated tetra- and disaccharides.. Its activity is regulated as follows. Is inhibited by Zn(2+), Ni(2+), Fe(2+) and Cu(2+). Functionally, endolytic, broad-specificity glycosaminoglycan lyase, which degrades the polysaccharides chondroitin, chondroitin-4-sulfate, chondroitin-6-sulfate, dermatan sulfate and to a lesser extent hyaluronan, by beta-elimination of 1,4-hexosaminidic bond to unsaturated tetrasaccharides and disaccharides. Is not active against keratan sulfate, heparan sulfate, and heparin. Is able to promote functional recovery in the injured central nervous system (CNS), via its role in the disruption of the normal organization of the extracellular matrix (ECM). This Proteus vulgaris protein is Chondroitin sulfate ABC endolyase.